The following is a 58-amino-acid chain: DNA-binding protein (58 aa).

Basic residues-rich tracts occupy residues 1-19 (MVRR…RSRS) and 28-58 (SRYR…NQYI). The segment at 1–58 (MVRRRRSRSPYRRRSRSRSRSGSDRSRSRYRSRSRSRSRSRSRARSRSPYHHHINQYI) is disordered.

Post-translationally, probably phosphorylated in infected cells.

It is found in the virion. Functionally, thought to be responsible for DNA condensation during packaging of the nucleocapsids. The protein is DNA-binding protein (P7.3) of Cryptophlebia leucotreta granulosis virus (ClGV).